Reading from the N-terminus, the 339-residue chain is 4-hydroxy-2-oxovalerate aldolase (339 aa).

Residues 7–257 (IRIMDTTLRD…QVGVDLYKIM (251 aa)) form the Pyruvate carboxyltransferase domain. 15 to 16 (RD) contacts substrate. A Mn(2+)-binding site is contributed by Asp16. The active-site Proton acceptor is His19. Ser169 and His196 together coordinate substrate. Residues His196 and His198 each contribute to the Mn(2+) site. Tyr286 lines the substrate pocket.

The protein belongs to the 4-hydroxy-2-oxovalerate aldolase family.

It carries out the reaction (S)-4-hydroxy-2-oxopentanoate = acetaldehyde + pyruvate. In Pelotomaculum thermopropionicum (strain DSM 13744 / JCM 10971 / SI), this protein is 4-hydroxy-2-oxovalerate aldolase.